The sequence spans 112 residues: MDNTNRLRLRRGPSLRQTKFTRSRYDSEEVSSIEWEFISMTEQEEDLISRMYRLVGNRWDLIAGRVVGRKANEIERYWIMRNSDYFSHKRRRLNNSPFFSTSPLNLQENLKL.

Residues T41–W78 form the Myb-like domain.

In terms of assembly, interacts with GL3. Expressed in stomatal guard mother cells, young stomata and trichomes of young leaves, and inflorescences.

The protein localises to the nucleus. In terms of biological role, MYB-type transcription factor involved in epidermal cell fate specification. Acts as a negative regulator of trichome development, by mediating lateral inhibition. Promotes the formation of hair developing cells in H position in root epidermis, probably by inhibiting non-hair cell formation. This Arabidopsis thaliana (Mouse-ear cress) protein is MYB-like transcription factor ETC2 (ETC2).